We begin with the raw amino-acid sequence, 297 residues long: Acetyl-coenzyme A carboxylase carboxyl transferase subunit beta (297 aa).

The tract at residues 1–23 (MSWIERILGRTSSSSSSSKSKVP) is disordered. In terms of domain architecture, CoA carboxyltransferase N-terminal spans 26-295 (VWTKCTSCEQ…PFKTAELIVE (270 aa)). Zn(2+) is bound by residues C30, C33, C49, and C52. The C4-type zinc-finger motif lies at 30-52 (CTSCEQVLYSEELKRNMHVCPKC).

It belongs to the AccD/PCCB family. In terms of assembly, acetyl-CoA carboxylase is a heterohexamer composed of biotin carboxyl carrier protein (AccB), biotin carboxylase (AccC) and two subunits each of ACCase subunit alpha (AccA) and ACCase subunit beta (AccD). Zn(2+) is required as a cofactor.

It is found in the cytoplasm. It carries out the reaction N(6)-carboxybiotinyl-L-lysyl-[protein] + acetyl-CoA = N(6)-biotinyl-L-lysyl-[protein] + malonyl-CoA. It participates in lipid metabolism; malonyl-CoA biosynthesis; malonyl-CoA from acetyl-CoA: step 1/1. Functionally, component of the acetyl coenzyme A carboxylase (ACC) complex. Biotin carboxylase (BC) catalyzes the carboxylation of biotin on its carrier protein (BCCP) and then the CO(2) group is transferred by the transcarboxylase to acetyl-CoA to form malonyl-CoA. The polypeptide is Acetyl-coenzyme A carboxylase carboxyl transferase subunit beta (Actinobacillus pleuropneumoniae serotype 5b (strain L20)).